The chain runs to 360 residues: Vitopine synthase (360 aa).

The protein belongs to the lysopine/nopaline/octopine/opine/vitopine dehydrogenases family.

The chain is Vitopine synthase (vis) from Allorhizobium ampelinum (strain ATCC BAA-846 / DSM 112012 / S4) (Agrobacterium vitis (strain S4)).